The sequence spans 246 residues: Proteasome subunit beta type-4 (246 aa).

A propeptide spanning residues 1 to 23 is cleaved from the precursor; it reads MTTFSVPIDNGDSMKIAEEESQR. Residue threonine 24 is the Nucleophile of the active site.

Belongs to the peptidase T1B family. In terms of assembly, component of the 20S core complex of the 26S proteasome. The 26S proteasome is composed of a core protease (CP), known as the 20S proteasome, capped at one or both ends by the 19S regulatory particle (RP/PA700). The 20S proteasome core is composed of 28 subunits that are arranged in four stacked rings, resulting in a barrel-shaped structure. The two end rings are each formed by seven alpha subunits, and the two central rings are each formed by seven beta subunits. The catalytic chamber with the active sites is on the inside of the barrel. Ubiquitous low levels, higher expression in siliques and flowers.

The protein resides in the cytoplasm. The protein localises to the nucleus. Functionally, non-catalytic component of the proteasome, a multicatalytic proteinase complex which is characterized by its ability to cleave peptides with Arg, Phe, Tyr, Leu, and Glu adjacent to the leaving group at neutral or slightly basic pH. The proteasome has an ATP-dependent proteolytic activity. This chain is Proteasome subunit beta type-4 (PBG1), found in Arabidopsis thaliana (Mouse-ear cress).